A 465-amino-acid polypeptide reads, in one-letter code: Sodium-coupled neutral amino acid transporter 7 (465 aa).

11 consecutive transmembrane segments (helical) span residues 54–74 (AVFI…PAAF), 82–102 (AGVT…VILA), 128–148 (ICEL…LIII), 177–197 (FTIT…KEIG), 204–224 (TLSV…YIWP), 244–264 (FNAM…VPVF), 275–295 (WWGV…GTGV), 318–338 (VAVA…YPIL), 370–390 (ILQT…IPDI), 394–414 (ISLI…LCLI), and 427–447 (SWNA…FIFG).

The protein belongs to the amino acid/polyamine transporter 2 family.

Its subcellular location is the lysosome membrane. It is found in the cell projection. It localises to the axon. It catalyses the reaction L-asparagine(in) + Na(+)(in) = L-asparagine(out) + Na(+)(out). The catalysed reaction is L-glutamine(in) + Na(+)(in) = L-glutamine(out) + Na(+)(out). Its function is as follows. Symporter that selectively cotransports sodium ions and amino acids, such as L-glutamine and L-asparagine from the lysosome into the cytoplasm and may participates in mTORC1 activation. The transport activity requires an acidic lysosomal lumen. The protein is Sodium-coupled neutral amino acid transporter 7 of Danio rerio (Zebrafish).